Consider the following 208-residue polypeptide: MARYRGAVERLERRFGVSLALKGERRLSGKSALDKRAYGPGQHGQRRAKTSDYGLQLKEKQKAKMMYGISEKQFRSIFVEANRLDGNTGENLIRLIERRLDNVVYRMGFATTRSSARQLVTHGHVLVDGKRLDIPSYFVRSGQKIEIKEKTKSNPQVVRATELTAQTGIVPWIDVEKDKKYGIFTRYPEREEVVVPIEERLIVELYSK.

The disordered stretch occupies residues 31–51 (SALDKRAYGPGQHGQRRAKTS). An S4 RNA-binding domain is found at 98-156 (RRLDNVVYRMGFATTRSSARQLVTHGHVLVDGKRLDIPSYFVRSGQKIEIKEKTKSNPQ).

It belongs to the universal ribosomal protein uS4 family. In terms of assembly, part of the 30S ribosomal subunit. Contacts protein S5. The interaction surface between S4 and S5 is involved in control of translational fidelity.

In terms of biological role, one of the primary rRNA binding proteins, it binds directly to 16S rRNA where it nucleates assembly of the body of the 30S subunit. With S5 and S12 plays an important role in translational accuracy. In Helicobacter pylori (strain HPAG1), this protein is Small ribosomal subunit protein uS4.